The primary structure comprises 164 residues: Nucleotide-binding protein Acid345_2028 (164 aa).

Belongs to the YajQ family.

Nucleotide-binding protein. This Koribacter versatilis (strain Ellin345) protein is Nucleotide-binding protein Acid345_2028.